Here is a 138-residue protein sequence, read N- to C-terminus: Small ribosomal subunit protein uS12 (138 aa).

Positions 33–55 (KEHTNVSSPQKRGVCTRVGTMTP) are disordered.

It belongs to the universal ribosomal protein uS12 family. As to quaternary structure, part of the 30S ribosomal subunit. Contacts proteins S8 and S17. May interact with IF1 in the 30S initiation complex. Interacts with BrxC.

With S4 and S5 plays an important role in translational accuracy. Functionally, interacts with and stabilizes bases of the 16S rRNA that are involved in tRNA selection in the A site and with the mRNA backbone. Located at the interface of the 30S and 50S subunits, it traverses the body of the 30S subunit contacting proteins on the other side and probably holding the rRNA structure together. The combined cluster of proteins S8, S12 and S17 appears to hold together the shoulder and platform of the 30S subunit. In Bacillus subtilis (strain 168), this protein is Small ribosomal subunit protein uS12 (rpsL).